The primary structure comprises 181 residues: MMLQHPGQVSASEVSATAIVPCLSPPGSLVFEDFANLTPFVKEELRFAIQNKHLCHRMSSALESVTVNNRPLEMSVTKSEAAPEEDERKRRRRERNKIAAAKCRNKKKEKTECLQKESEKLESVNAELKAQIEELKNEKQHLIYMLNLHRPTCIVRAQNGRTPEDERNLFIQQIKEGTLQS.

The tract at residues 73–97 (EMSVTKSEAAPEEDERKRRRRERNK) is disordered. A Glycyl lysine isopeptide (Lys-Gly) (interchain with G-Cter in SUMO2) cross-link involves residue K78. The bZIP domain maps to 86 to 149 (DERKRRRRER…QHLIYMLNLH (64 aa)). Residues 88–110 (RKRRRRERNKIAAAKCRNKKKEK) form a basic motif region. Residues 114–142 (LQKESEKLESVNAELKAQIEELKNEKQHL) are leucine-zipper. T162 is modified (phosphothreonine). Residue K175 forms a Glycyl lysine isopeptide (Lys-Gly) (interchain with G-Cter in SUMO2) linkage.

This sequence belongs to the bZIP family. ATF subfamily. In terms of assembly, binds DNA as a homodimer or a heterodimer. Interacts with KAT5; promoting KAT5 autoacetylation and KAT5 deubiquitination by USP7.

Its subcellular location is the nucleus. Functionally, this protein binds the cAMP response element (CRE) (consensus: 5'-GTGACGT[AC][AG]-3'), a sequence present in many viral and cellular promoters. Represses transcription from promoters with ATF sites. It may repress transcription by stabilizing the binding of inhibitory cofactors at the promoter. The chain is Cyclic AMP-dependent transcription factor ATF-3 from Mus musculus (Mouse).